The sequence spans 344 residues: S-adenosylmethionine:tRNA ribosyltransferase-isomerase (344 aa).

It belongs to the QueA family. In terms of assembly, monomer.

Its subcellular location is the cytoplasm. It catalyses the reaction 7-aminomethyl-7-carbaguanosine(34) in tRNA + S-adenosyl-L-methionine = epoxyqueuosine(34) in tRNA + adenine + L-methionine + 2 H(+). The protein operates within tRNA modification; tRNA-queuosine biosynthesis. Transfers and isomerizes the ribose moiety from AdoMet to the 7-aminomethyl group of 7-deazaguanine (preQ1-tRNA) to give epoxyqueuosine (oQ-tRNA). The protein is S-adenosylmethionine:tRNA ribosyltransferase-isomerase of Levilactobacillus brevis (strain ATCC 367 / BCRC 12310 / CIP 105137 / JCM 1170 / LMG 11437 / NCIMB 947 / NCTC 947) (Lactobacillus brevis).